A 957-amino-acid chain; its full sequence is Glycine dehydrogenase (decarboxylating) (957 aa).

Lys708 bears the N6-(pyridoxal phosphate)lysine mark.

The protein belongs to the GcvP family. In terms of assembly, the glycine cleavage system is composed of four proteins: P, T, L and H. Requires pyridoxal 5'-phosphate as cofactor.

It catalyses the reaction N(6)-[(R)-lipoyl]-L-lysyl-[glycine-cleavage complex H protein] + glycine + H(+) = N(6)-[(R)-S(8)-aminomethyldihydrolipoyl]-L-lysyl-[glycine-cleavage complex H protein] + CO2. In terms of biological role, the glycine cleavage system catalyzes the degradation of glycine. The P protein binds the alpha-amino group of glycine through its pyridoxal phosphate cofactor; CO(2) is released and the remaining methylamine moiety is then transferred to the lipoamide cofactor of the H protein. The sequence is that of Glycine dehydrogenase (decarboxylating) from Klebsiella pneumoniae (strain 342).